We begin with the raw amino-acid sequence, 373 residues long: Ferroptosis suppressor protein 1 (373 aa).

Residue glycine 2 is the site of N-myristoyl glycine attachment. The chain crosses the membrane as a helical span at residues 7 to 27 (VESGALHVVIVGGGFGGIAAA). 6-hydroxy-FAD contacts are provided by residues 18–22 (GGGFG), arginine 54, and valine 82. An N6-acetyllysine; by KAT2B modification is found at lysine 168. A 6-hydroxy-FAD-binding site is contributed by aspartate 285.

It belongs to the FAD-dependent oxidoreductase family. In terms of assembly, interacts with importin subunits KPNA2 and IPO5; this interaction likely mediates the translocation into the nucleus upon oxidative stress. Requires 6-hydroxy-FAD as cofactor. In terms of processing, N-myristoylation at Gly-2 mediates the recruitment to lipid droplets and plasma membrane, enabling its anti-lipid peroxidation activity. Post-translationally, acetylation at Lys-168 prevents AIFM2 ubiquitination and degradation, thereby inhibiting ferroptosis. KAT2B mediates acetylation at Lys-168, while HDAC3 removes it. Ubiquitinated. AIFM2 undergoes 'Lys-29'-ubiquitination and proteasomal degradation, which is inhibited by acetylation at Lys-168. Detected in most normal tissues as two transcripts of 1.8 and 4.0 kb in length, respectively. Highly expressed in heart, moderately in liver and skeletal muscles, and expressed at low levels in placenta, lung, kidney, and pancreas. Both transcripts expressed following p53/TP53 induction. The shorter 1.8 kb transcript seems to be the major transcript in EB1 colon cancer cells.

Its subcellular location is the lipid droplet. The protein resides in the cell membrane. The protein localises to the cytoplasm. It localises to the mitochondrion membrane. It is found in the nucleus. It catalyses the reaction ubiquinone-10 + NADH + H(+) = ubiquinol-10 + NAD(+). It carries out the reaction phylloquinone + NADH + H(+) = phylloquinol + NAD(+). The catalysed reaction is menaquinone-4 + NADH + H(+) = menaquinol-4 + NAD(+). The enzyme catalyses menadione + NADH + H(+) = menadiol + NAD(+). Its activity is regulated as follows. The modification by 4-hydroxy-2-nonenal (HNE) adduction in mitochondria results in loss of the oxidoreductase activity and activation of a novel function in mitochondrial oxidative stress signaling. In terms of biological role, a NAD(P)H-dependent oxidoreductase that acts as a key inhibitor of ferroptosis. At the plasma membrane, catalyzes reduction of coenzyme Q/ubiquinone-10 to ubiquinol-10, a lipophilic radical-trapping antioxidant that prevents lipid oxidative damage and consequently ferroptosis. Acts in parallel to GPX4 to suppress phospholipid peroxidation and ferroptosis. This anti-ferroptotic function is independent of cellular glutathione levels. Also acts as a potent radical-trapping antioxidant by mediating warfarin-resistant vitamin K reduction in the canonical vitamin K cycle: catalyzes NAD(P)H-dependent reduction of vitamin K (phylloquinone, menaquinone-4 and menadione) to hydroquinone forms. Hydroquinones act as potent radical-trapping antioxidants inhibitor of phospholipid peroxidation and ferroptosis. May play a role in mitochondrial stress signaling. Upon oxidative stress, associates with the lipid peroxidation end product 4-hydroxy-2-nonenal (HNE) forming a lipid adduct devoid of oxidoreductase activity, which then translocates from mitochondria into the nucleus triggering DNA damage and cell death. Capable of DNA binding in a non-sequence specific way. The chain is Ferroptosis suppressor protein 1 from Homo sapiens (Human).